The sequence spans 349 residues: N-acetyltaurine hydrolase (349 aa).

A divalent metal cation contacts are provided by H26, H28, E169, H201, H230, and D298.

This sequence belongs to the metallo-dependent hydrolases superfamily. Phosphotriesterase family. A divalent metal cation is required as a cofactor.

The protein localises to the cytoplasm. The protein resides in the cytosol. It carries out the reaction N-acetyltaurine + H2O = taurine + acetate. It catalyses the reaction N-propanoyltaurine + H2O = propanoate + taurine. The catalysed reaction is N-acetyl-L-methionine + H2O = L-methionine + acetate. The enzyme catalyses N-acetyl-L-isoleucine + H2O = L-isoleucine + acetate. It carries out the reaction N-acetyl-L-leucine + H2O = L-leucine + acetate. It catalyses the reaction N-acetyl-L-valine + H2O = L-valine + acetate. N-acetyltaurine hydrolase that regulates feeding by catalyzing the hydrolysis of N-acetyltaurine into taurine and acetate. N-acetyltaurine has anorexigenic and anti-obesity effects that are dependent on GFRAL receptor and GDF15. PTER also acts on other N-acetyl amino acids (Met, Ile, Leu, Val) and N-propionyltaurine, but at lower rates. The chain is N-acetyltaurine hydrolase from Homo sapiens (Human).